The sequence spans 369 residues: Glutamate 5-kinase (369 aa).

An ATP-binding site is contributed by Lys7. Positions 48, 135, and 147 each coordinate substrate. Residues 167–168 and 208–214 each bind ATP; these read TD and SGGMASK. Residues 275 to 353 enclose the PUA domain; that stretch reads AGALHLDEGA…HEIAALLGIE (79 aa).

This sequence belongs to the glutamate 5-kinase family.

The protein resides in the cytoplasm. It carries out the reaction L-glutamate + ATP = L-glutamyl 5-phosphate + ADP. It functions in the pathway amino-acid biosynthesis; L-proline biosynthesis; L-glutamate 5-semialdehyde from L-glutamate: step 1/2. In terms of biological role, catalyzes the transfer of a phosphate group to glutamate to form L-glutamate 5-phosphate. The protein is Glutamate 5-kinase of Gloeobacter violaceus (strain ATCC 29082 / PCC 7421).